We begin with the raw amino-acid sequence, 54 residues long: Protein YojO (54 aa).

This sequence belongs to the YojO family.

In Escherichia coli (strain K12), this protein is Protein YojO (yojO).